Here is a 118-residue protein sequence, read N- to C-terminus: Non-specific lipid-transfer protein A (118 aa).

An N-terminal signal peptide occupies residues 1–25 (MAGVMKLACLVLACMIVAGPITANR). 4 cysteine pairs are disulfide-bonded: cysteine 29-cysteine 76, cysteine 39-cysteine 53, cysteine 54-cysteine 100, and cysteine 74-cysteine 114.

Belongs to the plant LTP family.

Plant non-specific lipid-transfer proteins transfer phospholipids as well as galactolipids across membranes. May play a role in wax or cutin deposition in the cell walls of expanding epidermal cells and certain secretory tissues. The polypeptide is Non-specific lipid-transfer protein A (WAX9A) (Brassica oleracea var. italica (Broccoli)).